The sequence spans 91 residues: Ragulator complex protein LAMTOR5 homolog (91 aa).

The protein belongs to the LAMTOR5 family. As to quaternary structure, part of the Ragulator complex.

The protein resides in the cytoplasm. The protein localises to the lysosome. Functionally, regulator of the TOR pathway, a signaling cascade that promotes cell growth in response to growth factors, energy levels, and amino acids. As part of the Ragulator complex, may activate the TOR signaling cascade in response to amino acids. This Ixodes scapularis (Black-legged tick) protein is Ragulator complex protein LAMTOR5 homolog.